The primary structure comprises 95 residues: MTVKHLIVCYDVEKTKDRNKVIKVLEYYGLIRVQYSVFMGSLTETRLHQMNARIKREFTKPSIKILVIEVCNACMERALLVHEELPKVNRQFEVI.

Aspartate 11 lines the Mg(2+) pocket.

The protein belongs to the CRISPR-associated endoribonuclease Cas2 protein family. Homodimer, forms a heterotetramer with a Cas1 homodimer. Mg(2+) is required as a cofactor.

Functionally, CRISPR (clustered regularly interspaced short palindromic repeat), is an adaptive immune system that provides protection against mobile genetic elements (viruses, transposable elements and conjugative plasmids). CRISPR clusters contain sequences complementary to antecedent mobile elements and target invading nucleic acids. CRISPR clusters are transcribed and processed into CRISPR RNA (crRNA). Functions as a ssRNA-specific endoribonuclease. Involved in the integration of spacer DNA into the CRISPR cassette. The chain is CRISPR-associated endoribonuclease Cas2 1 from Methanospirillum hungatei JF-1 (strain ATCC 27890 / DSM 864 / NBRC 100397 / JF-1).